A 362-amino-acid chain; its full sequence is 3-dehydroquinate synthase (362 aa).

Residues 95–99 (GVVGD), 119–120 (TT), Lys-132, and Lys-141 contribute to the NAD(+) site. The Zn(2+) site is built by Glu-174, His-238, and His-255.

Belongs to the sugar phosphate cyclases superfamily. Dehydroquinate synthase family. Requires Co(2+) as cofactor. Zn(2+) serves as cofactor. The cofactor is NAD(+).

The protein resides in the cytoplasm. It catalyses the reaction 7-phospho-2-dehydro-3-deoxy-D-arabino-heptonate = 3-dehydroquinate + phosphate. The protein operates within metabolic intermediate biosynthesis; chorismate biosynthesis; chorismate from D-erythrose 4-phosphate and phosphoenolpyruvate: step 2/7. Catalyzes the conversion of 3-deoxy-D-arabino-heptulosonate 7-phosphate (DAHP) to dehydroquinate (DHQ). In Chlorobium luteolum (strain DSM 273 / BCRC 81028 / 2530) (Pelodictyon luteolum), this protein is 3-dehydroquinate synthase.